A 1416-amino-acid polypeptide reads, in one-letter code: Tiny macrocysts protein B (1416 aa).

8 helical membrane passes run 47-67 (ILTI…GFKH), 93-113 (FGYL…ILGF), 140-160 (FVSF…LIGL), 185-205 (ANLP…IVAF), 231-251 (VTVL…DFVP), 253-273 (LTSI…IIVL), 285-305 (SGFY…MGIN), and 315-335 (ITIV…MFYF). The span at 356–372 (LKDANKKGKRNSVEKES) shows a compositional bias: basic and acidic residues. 2 disordered regions span residues 356–377 (LKDA…PTSK) and 662–691 (IEKS…RRGK). 2 consecutive transmembrane segments (helical) span residues 706 to 726 (WLMI…LVVF) and 953 to 973 (AILY…AVLF). Disordered stretches follow at residues 1018–1103 (RDNL…RPLM) and 1119–1144 (NVRL…ATRT). The span at 1024–1039 (TTDDDGRDDHLGEDDN) shows a compositional bias: acidic residues. 2 stretches are compositionally biased toward low complexity: residues 1048–1062 (NNNN…NNNN) and 1083–1094 (SSSGSNVLNTSS). Over residues 1123-1144 (QAKDEEITNGGGERKGSDATRT) the composition is skewed to basic and acidic residues. Transmembrane regions (helical) follow at residues 1179-1199 (ILAT…TFTV), 1325-1345 (WFLA…FTYF), and 1358-1378 (VLTA…VVLF).

The protein resides in the membrane. Its function is as follows. Regulator of the cAMP signaling pathway specific to sexual development. Controls the levels of external cAMP by regulating the expression of phosphodiesterase pdsA and its inhibitor pdiA. The sequence is that of Tiny macrocysts protein B (tmcB) from Dictyostelium discoideum (Social amoeba).